Reading from the N-terminus, the 379-residue chain is Chaperone protein DnaJ 2 (379 aa).

The J domain maps to Asp-4 to Gly-68. The CR-type zinc finger occupies Gly-130–Arg-212. 8 residues coordinate Zn(2+): Cys-143, Cys-146, Cys-160, Cys-163, Cys-186, Cys-189, Cys-200, and Cys-203. 4 CXXCXGXG motif repeats span residues Cys-143–Gly-150, Cys-160–Gly-167, Cys-186–Ala-193, and Cys-200–Gly-207. Residues Arg-351–Ser-379 are disordered. Positions Gly-358–Leu-367 are enriched in polar residues. Basic and acidic residues predominate over residues Arg-370–Ser-379.

Belongs to the DnaJ family. Homodimer. It depends on Zn(2+) as a cofactor.

The protein resides in the cytoplasm. Functionally, participates actively in the response to hyperosmotic and heat shock by preventing the aggregation of stress-denatured proteins and by disaggregating proteins, also in an autonomous, DnaK-independent fashion. Unfolded proteins bind initially to DnaJ; upon interaction with the DnaJ-bound protein, DnaK hydrolyzes its bound ATP, resulting in the formation of a stable complex. GrpE releases ADP from DnaK; ATP binding to DnaK triggers the release of the substrate protein, thus completing the reaction cycle. Several rounds of ATP-dependent interactions between DnaJ, DnaK and GrpE are required for fully efficient folding. Also involved, together with DnaK and GrpE, in the DNA replication of plasmids through activation of initiation proteins. The polypeptide is Chaperone protein DnaJ 2 (Streptomyces albus G).